A 1043-amino-acid polypeptide reads, in one-letter code: Beta-klotho (1043 aa).

The Extracellular portion of the chain corresponds to 1 to 994 (MKTGCAAGSP…ICSFLVEKKP (994 aa)). Glycosyl hydrolase-1 regions lie at residues 77 to 506 (LYDT…DNGF) and 515 to 965 (MKGR…SSGL). N-linked (GlcNAc...) asparagine glycosylation is found at Asn-84, Asn-122, Asn-161, Asn-211, Asn-262, Asn-308, Asn-389, Asn-552, Asn-609, Asn-700, Asn-704, and Asn-837. The helical transmembrane segment at 995 to 1015 (LIFFGCCFISTLAVLLSITVF) threads the bilayer. At 1016–1043 (HHQKRRKFQKARNLQNIPLKKGHSRVFS) the chain is on the cytoplasmic side.

The protein belongs to the glycosyl hydrolase 1 family. Klotho subfamily. As to quaternary structure, interacts with FGF19; this interaction is direct. Interacts (via C-terminus) with FGF21; this interaction is direct. Interacts with FGFR1 and FGFR4. Present in liver, muscle and white adipose tissue, but not in kidney (at protein level). Expressed in liver and pancreas, and at lower levels in skin, stomach, skeletal muscle, small intestine and lung.

It localises to the cell membrane. Functionally, contributes to the transcriptional repression of cholesterol 7-alpha-hydroxylase (CYP7A1), the rate-limiting enzyme in bile acid synthesis. Probably inactive as a glycosidase. Increases the ability of FGFR1 and FGFR4 to bind FGF21. The protein is Beta-klotho (Klb) of Mus musculus (Mouse).